The primary structure comprises 721 residues: Polyribonucleotide nucleotidyltransferase (721 aa).

Mg(2+)-binding residues include Asp495 and Asp501. The KH domain occupies 562–621 (PRLLSFRIDPELIGTVIGPGGRTIKGITERTNTKIDIEDSGIVTIASHDGAAADEAQKII). The region spanning 631–699 (GEVFSGSITR…NRGRINLTLR (69 aa)) is the S1 motif domain. Positions 698-721 (LRGVPQSGDGAGEEPQPTPVAPLS) are disordered.

Belongs to the polyribonucleotide nucleotidyltransferase family. The cofactor is Mg(2+).

It is found in the cytoplasm. The enzyme catalyses RNA(n+1) + phosphate = RNA(n) + a ribonucleoside 5'-diphosphate. In terms of biological role, involved in mRNA degradation. Catalyzes the phosphorolysis of single-stranded polyribonucleotides processively in the 3'- to 5'-direction. The sequence is that of Polyribonucleotide nucleotidyltransferase from Parasynechococcus marenigrum (strain WH8102).